A 425-amino-acid polypeptide reads, in one-letter code: Stabilizer of axonemal microtubules 4 (425 aa).

Disordered stretches follow at residues 259 to 297 (RGSDRDTGYSRVSERSLNPRMPTPSSQPTSMSHRSYQPP) and 315 to 335 (NKEPTGFTLNNPSYVRSSYEQ). Over residues 260-272 (GSDRDTGYSRVSE) the composition is skewed to basic and acidic residues. Positions 277–290 (PRMPTPSSQPTSMS) are enriched in low complexity. Polar residues predominate over residues 321–332 (FTLNNPSYVRSS).

Microtubule inner protein component of sperm flagellar doublet microtubules. Interacts with PPP1CA. Expressed in brain, ovaries and testis. Expressed in the tracheal epithelium and in secondary spermatocytes and spermatids present in the seminiferous tubule. Expressed in ependymal cells lining the ventricular walls of the brain.

The protein localises to the cell projection. It is found in the cilium. It localises to the cytoplasm. The protein resides in the cytoskeleton. Its subcellular location is the flagellum axoneme. The protein is Stabilizer of axonemal microtubules 4 of Rattus norvegicus (Rat).